The sequence spans 382 residues: Lipid-A-disaccharide synthase (382 aa).

This sequence belongs to the LpxB family.

The catalysed reaction is 2-N,3-O-bis[(3R)-3-hydroxytetradecanoyl]-alpha-D-glucosaminyl 1-phosphate + UDP-2-N,3-O-bis[(3R)-3-hydroxytetradecanoyl]-alpha-D-glucosamine = lipid A disaccharide (E. coli) + UDP + H(+). The enzyme catalyses a lipid X + a UDP-2-N,3-O-bis[(3R)-3-hydroxyacyl]-alpha-D-glucosamine = a lipid A disaccharide + UDP + H(+). The protein operates within glycolipid biosynthesis; lipid IV(A) biosynthesis; lipid IV(A) from (3R)-3-hydroxytetradecanoyl-[acyl-carrier-protein] and UDP-N-acetyl-alpha-D-glucosamine: step 5/6. In terms of biological role, condensation of UDP-2,3-diacylglucosamine and 2,3-diacylglucosamine-1-phosphate to form lipid A disaccharide, a precursor of lipid A, a phosphorylated glycolipid that anchors the lipopolysaccharide to the outer membrane of the cell. The chain is Lipid-A-disaccharide synthase from Serratia proteamaculans (strain 568).